An 88-amino-acid polypeptide reads, in one-letter code: Small ribosomal subunit protein bS18B (88 aa).

Belongs to the bacterial ribosomal protein bS18 family. In terms of assembly, part of the 30S ribosomal subunit. Forms a tight heterodimer with protein bS6.

In terms of biological role, binds as a heterodimer with protein bS6 to the central domain of the 16S rRNA, where it helps stabilize the platform of the 30S subunit. This chain is Small ribosomal subunit protein bS18B (rpsR2), found in Mycobacterium bovis (strain ATCC BAA-935 / AF2122/97).